The sequence spans 84 residues: Small ribosomal subunit protein uS17 (84 aa).

It belongs to the universal ribosomal protein uS17 family. Part of the 30S ribosomal subunit.

Its function is as follows. One of the primary rRNA binding proteins, it binds specifically to the 5'-end of 16S ribosomal RNA. The protein is Small ribosomal subunit protein uS17 of Borrelia hermsii (strain HS1 / DAH).